The primary structure comprises 207 residues: Probable RNA 2'-phosphotransferase (207 aa).

The protein belongs to the KptA/TPT1 family.

Removes the 2'-phosphate from RNA via an intermediate in which the phosphate is ADP-ribosylated by NAD followed by a presumed transesterification to release the RNA and generate ADP-ribose 1''-2''-cyclic phosphate (APPR&gt;P). May function as an ADP-ribosylase. The chain is Probable RNA 2'-phosphotransferase from Methanosarcina acetivorans (strain ATCC 35395 / DSM 2834 / JCM 12185 / C2A).